A 212-amino-acid chain; its full sequence is Leucine efflux protein (212 aa).

6 helical membrane-spanning segments follow: residues 12–32 (TYLVGAIFIVLVPGPNTLFVL), 49–69 (GVFIGDAVLMFLAWAGVATLI), 71–91 (TTPILFNIVRYLGAFYLLYLG), 122–142 (ILSLTNPKAILFYVSFFVQFI), 153–173 (FFILATTLELVSFCYLSFLII), and 188–208 (LAKVGNSLIGLMFVGFAARLA).

Belongs to the Rht family.

The protein localises to the cell inner membrane. The enzyme catalyses L-leucine(in) + H(+)(out) = L-leucine(out) + H(+)(in). Exporter of leucine. This chain is Leucine efflux protein (leuE), found in Escherichia coli O6:K15:H31 (strain 536 / UPEC).